Reading from the N-terminus, the 184-residue chain is Photosystem I assembly protein Ycf4 (184 aa).

Helical transmembrane passes span 19–39 (ISNLCWAFTLFLGSLGFVLVG) and 57–77 (IIFFPQGIVMSFYGIAGLFIS).

Belongs to the Ycf4 family.

It localises to the plastid thylakoid membrane. Its function is as follows. Seems to be required for the assembly of the photosystem I complex. This Cuscuta reflexa (Southern Asian dodder) protein is Photosystem I assembly protein Ycf4.